The following is a 621-amino-acid chain: Chaperone protein HtpG (621 aa).

An a; substrate-binding region spans residues 1-328 (MKQEKKKFDA…SEDLPLNISR (328 aa)). A b region spans residues 329–544 (ESLQHNNVLE…EAAMDIRMER (216 aa)). A disordered region spans residues 479–498 (VDQATSSSEEKNKDDKKSDD). Residues 486–498 (SEEKNKDDKKSDD) show a composition bias toward basic and acidic residues. The c stretch occupies residues 545–621 (FLIEQKQIAN…LNDIVQKAIL (77 aa)).

It belongs to the heat shock protein 90 family. In terms of assembly, homodimer.

It is found in the cytoplasm. Molecular chaperone. Has ATPase activity. The protein is Chaperone protein HtpG of Rickettsia bellii (strain OSU 85-389).